Reading from the N-terminus, the 682-residue chain is Methionine--tRNA ligase (682 aa).

A 'HIGH' region motif is present at residues 15 to 25 (PYANGAIHLGH). The Zn(2+) site is built by Cys-146, Cys-149, Cys-159, and Cys-162. The 'KMSKS' region signature appears at 331–335 (KMSKS). An ATP-binding site is contributed by Lys-334. Residues 580–682 (DFAKLDMRVA…SGVTAGMQVK (103 aa)) form the tRNA-binding domain.

This sequence belongs to the class-I aminoacyl-tRNA synthetase family. MetG type 1 subfamily. Homodimer. Zn(2+) is required as a cofactor.

Its subcellular location is the cytoplasm. The enzyme catalyses tRNA(Met) + L-methionine + ATP = L-methionyl-tRNA(Met) + AMP + diphosphate. Is required not only for elongation of protein synthesis but also for the initiation of all mRNA translation through initiator tRNA(fMet) aminoacylation. In Haemophilus influenzae (strain ATCC 51907 / DSM 11121 / KW20 / Rd), this protein is Methionine--tRNA ligase.